Consider the following 216-residue polypeptide: Ras-related protein YPTC6 (216 aa).

GTP is bound at residue 19-26 (GDSGVGKS). Residues 41–49 (SKSTIGVEF) carry the Effector region motif. GTP contacts are provided by residues 67 to 71 (DTAGQ) and 125 to 128 (NKSD). 2 S-geranylgeranyl cysteine lipidation sites follow: Cys214 and Cys215.

This sequence belongs to the small GTPase superfamily. Rab family.

It localises to the cell membrane. In Chlamydomonas reinhardtii (Chlamydomonas smithii), this protein is Ras-related protein YPTC6 (YPTC6).